The chain runs to 169 residues: Crossover junction endodeoxyribonuclease RuvC (169 aa).

Residues Asp11, Glu71, and Asp143 contribute to the active site. Asp11, Glu71, and Asp143 together coordinate Mg(2+).

Belongs to the RuvC family. As to quaternary structure, homodimer which binds Holliday junction (HJ) DNA. The HJ becomes 2-fold symmetrical on binding to RuvC with unstacked arms; it has a different conformation from HJ DNA in complex with RuvA. In the full resolvosome a probable DNA-RuvA(4)-RuvB(12)-RuvC(2) complex forms which resolves the HJ. The cofactor is Mg(2+).

The protein localises to the cytoplasm. The enzyme catalyses Endonucleolytic cleavage at a junction such as a reciprocal single-stranded crossover between two homologous DNA duplexes (Holliday junction).. In terms of biological role, the RuvA-RuvB-RuvC complex processes Holliday junction (HJ) DNA during genetic recombination and DNA repair. Endonuclease that resolves HJ intermediates. Cleaves cruciform DNA by making single-stranded nicks across the HJ at symmetrical positions within the homologous arms, yielding a 5'-phosphate and a 3'-hydroxyl group; requires a central core of homology in the junction. The consensus cleavage sequence is 5'-(A/T)TT(C/G)-3'. Cleavage occurs on the 3'-side of the TT dinucleotide at the point of strand exchange. HJ branch migration catalyzed by RuvA-RuvB allows RuvC to scan DNA until it finds its consensus sequence, where it cleaves and resolves the cruciform DNA. The protein is Crossover junction endodeoxyribonuclease RuvC of Rhizobium leguminosarum bv. trifolii (strain WSM2304).